Reading from the N-terminus, the 250-residue chain is Endonuclease NucS (250 aa).

Belongs to the NucS endonuclease family.

It is found in the cytoplasm. Functionally, cleaves both 3' and 5' ssDNA extremities of branched DNA structures. The chain is Endonuclease NucS from Sulfolobus acidocaldarius (strain ATCC 33909 / DSM 639 / JCM 8929 / NBRC 15157 / NCIMB 11770).